Reading from the N-terminus, the 609-residue chain is MSDNPPRMEVCPYCKKPFKRLKSHLPYCKMVGPTIPTDQKVYQSKPATLPRAKKMKGPIKDLIKAEGKELETENEERNSKLMMDKPEQTVKTFPLPAVGLERATTTKADKDIKNPIQPSFKMLKNTKPKTTFQEETKAQFYTSEKTSPKRELAEDLPKSGESRCNPLEAGASLLVGSIEPSLSNQDRKYSSTLPNDVQTTSGDLKLDKIDPQRQELLVKLLDVPTGDCHISPKNVSDGVKRVRTLLSNERDSKGRDHLSGVPTDVAVTETPEKNTESLILSLKMSSLGKIQVMEKQEKGLTLGVETCGSKGNAEKSMSATGEQEWTVMSHGCENFNTRDSVTEKESQGERPHLSLLIPRETTYEFHSVSQSSSQSLASLATIFLQEKKAEARNHNRVPDVKALMESPEGQLSLEPKSDSQFQASHTGCQSPVCSAQRHTPQSPFTNHAAAAGRKTLRSCVGLEWFPELYPGYLGLGVLPGKPQCWNAMARKPQLNSPQGERLLQVSLLERSSTHIRSLEPPTGLTTSNFSLMRLLGAVQKGWIRCNTTIRKSGFGGITMLSTGYFVLCCSWSFRRLKKLCRPLPWKSTVPPSVGVAKTTGDCRSKTCLD.

Residues 1 to 554 (MSDNPPRMEV…CNTTIRKSGF (554 aa)) lie on the Extracellular side of the membrane. Disordered stretches follow at residues 133-163 (QEET…GESR) and 406-425 (SPEG…QASH). Positions 146 to 161 (TSPKRELAEDLPKSGE) are enriched in basic and acidic residues. The helical transmembrane segment at 555–571 (GGITMLSTGYFVLCCSW) threads the bilayer. Residues 572–609 (SFRRLKKLCRPLPWKSTVPPSVGVAKTTGDCRSKTCLD) are Cytoplasmic-facing.

It localises to the mitochondrion inner membrane. The protein resides in the mitochondrion matrix. The protein localises to the mitochondrion nucleoid. Functionally, critical regulator of mitochondrial DNA (mtDNA) abundance. Binds dsDNA throughout the mitochondrial genome without sequence specificity and controls mtDNA copy number by promoting its replication. Also plays important roles in mitochondrial metabolism and cell proliferation. This chain is Mitochondrial nucleoid-associated protein 1, found in Pongo abelii (Sumatran orangutan).